Consider the following 254-residue polypeptide: Phosphoribosylaminoimidazole-succinocarboxamide synthase (254 aa).

It belongs to the SAICAR synthetase family.

It carries out the reaction 5-amino-1-(5-phospho-D-ribosyl)imidazole-4-carboxylate + L-aspartate + ATP = (2S)-2-[5-amino-1-(5-phospho-beta-D-ribosyl)imidazole-4-carboxamido]succinate + ADP + phosphate + 2 H(+). Its pathway is purine metabolism; IMP biosynthesis via de novo pathway; 5-amino-1-(5-phospho-D-ribosyl)imidazole-4-carboxamide from 5-amino-1-(5-phospho-D-ribosyl)imidazole-4-carboxylate: step 1/2. The chain is Phosphoribosylaminoimidazole-succinocarboxamide synthase from Gluconacetobacter diazotrophicus (strain ATCC 49037 / DSM 5601 / CCUG 37298 / CIP 103539 / LMG 7603 / PAl5).